The following is a 334-amino-acid chain: Malate dehydrogenase, cytoplasmic (334 aa).

NAD(+) is bound at residue 11–17 (GAAGQIA). Residues arginine 92 and arginine 98 each coordinate substrate. NAD(+) is bound by residues asparagine 105, glutamine 112, and 129–131 (VGN). The substrate site is built by asparagine 131 and arginine 162. The Proton acceptor role is filled by histidine 187.

The protein belongs to the LDH/MDH superfamily. MDH type 2 family. In terms of assembly, homodimer.

It is found in the cytoplasm. The protein localises to the cytosol. The catalysed reaction is (S)-malate + NAD(+) = oxaloacetate + NADH + H(+). The enzyme catalyses (S)-2-hydroxyglutarate + NAD(+) = 2-oxoglutarate + NADH + H(+). Its function is as follows. Catalyzes the reduction of aromatic alpha-keto acids in the presence of NADH. Plays essential roles in the malate-aspartate shuttle and the tricarboxylic acid cycle, important in mitochondrial NADH supply for oxidative phosphorylation. Catalyzes the reduction of 2-oxoglutarate to 2-hydroxyglutarate, leading to elevated reactive oxygen species (ROS). The chain is Malate dehydrogenase, cytoplasmic (MDH1) from Gallus gallus (Chicken).